The sequence spans 177 residues: Large ribosomal subunit protein uL6 (177 aa).

This sequence belongs to the universal ribosomal protein uL6 family. In terms of assembly, part of the 50S ribosomal subunit.

This protein binds to the 23S rRNA, and is important in its secondary structure. It is located near the subunit interface in the base of the L7/L12 stalk, and near the tRNA binding site of the peptidyltransferase center. This Brucella melitensis biotype 1 (strain ATCC 23456 / CCUG 17765 / NCTC 10094 / 16M) protein is Large ribosomal subunit protein uL6.